The following is a 368-amino-acid chain: ICEBs1 integrase (368 aa).

The Core-binding (CB) domain maps to 61-143; the sequence is VSFPTLISIY…SLSKIFDTAV (83 aa). A Tyr recombinase domain is found at 164-362; it reads KKMKFWRPEE…YPNKQKEMAD (199 aa). Catalysis depends on residues Arg201, Lys239, His313, Arg316, and His339. Tyr349 serves as the catalytic O-(3'-phospho-DNA)-tyrosine intermediate.

Belongs to the 'phage' integrase family.

Its function is as follows. Putative integrase that is involved in the insertion of the integrative and conjugative element ICEBs1. Required for the excision of ICEBs1 from the donor cell genome and subsequent integration in the recipient cell genome. Appears not to be transferred through the mating pore. Integration of ICEBs1 involves an attachment site in the chromosome, attB, and a site in the circular form of ICEBs1, attICEBs1. The polypeptide is ICEBs1 integrase (int) (Bacillus subtilis (strain 168)).